A 296-amino-acid polypeptide reads, in one-letter code: Ribonuclease H2 subunit A (296 aa).

The RNase H type-2 domain occupies 14-236 (PCLMGIDEAG…CTTHLKGEVE (223 aa)). Residues D20, E21, and D127 each coordinate a divalent metal cation.

Belongs to the RNase HII family. Eukaryotic subfamily. Mn(2+) is required as a cofactor. Requires Mg(2+) as cofactor.

The catalysed reaction is Endonucleolytic cleavage to 5'-phosphomonoester.. Its function is as follows. Catalytic subunit of RNase HII, an endonuclease that specifically degrades the RNA of RNA:DNA hybrids. Participates in DNA replication, possibly by mediating the removal of lagging-strand Okazaki fragment RNA primers during DNA replication. Mediates the excision of single ribonucleotides from DNA:RNA duplexes. The polypeptide is Ribonuclease H2 subunit A (Arabidopsis thaliana (Mouse-ear cress)).